The sequence spans 873 residues: DNA mismatch repair protein MutS (873 aa).

A disordered region spans residues 1-34; sequence MAAIPTPRLHRGVTHLSRQTKSRARHPMSTPQHT. The span at 8–26 shows a compositional bias: basic residues; that stretch reads RLHRGVTHLSRQTKSRARH. 635 to 642 is an ATP binding site; that stretch reads GPNMGGKS.

The protein belongs to the DNA mismatch repair MutS family.

In terms of biological role, this protein is involved in the repair of mismatches in DNA. It is possible that it carries out the mismatch recognition step. This protein has a weak ATPase activity. This is DNA mismatch repair protein MutS from Chromobacterium violaceum (strain ATCC 12472 / DSM 30191 / JCM 1249 / CCUG 213 / NBRC 12614 / NCIMB 9131 / NCTC 9757 / MK).